The primary structure comprises 268 residues: Hydroxyethylthiazole kinase (268 aa).

Met49 contributes to the substrate binding site. The ATP site is built by Lys124 and Thr168. Ala195 is a binding site for substrate.

This sequence belongs to the Thz kinase family. The cofactor is Mg(2+).

The enzyme catalyses 5-(2-hydroxyethyl)-4-methylthiazole + ATP = 4-methyl-5-(2-phosphooxyethyl)-thiazole + ADP + H(+). It participates in cofactor biosynthesis; thiamine diphosphate biosynthesis; 4-methyl-5-(2-phosphoethyl)-thiazole from 5-(2-hydroxyethyl)-4-methylthiazole: step 1/1. Functionally, catalyzes the phosphorylation of the hydroxyl group of 4-methyl-5-beta-hydroxyethylthiazole (THZ). The polypeptide is Hydroxyethylthiazole kinase (Archaeoglobus fulgidus (strain ATCC 49558 / DSM 4304 / JCM 9628 / NBRC 100126 / VC-16)).